A 157-amino-acid polypeptide reads, in one-letter code: Cytochrome c-type biogenesis protein CcmE (157 aa).

At 1-7 (MTPRQRR) the chain is on the cytoplasmic side. Residues 8–28 (LGLLAAALACCGVAAALVLNA) form a helical; Signal-anchor for type II membrane protein membrane-spanning segment. The Periplasmic portion of the chain corresponds to 29-157 (FRANLVFFFS…GAMAAQELRR (129 aa)). Residues H123 and Y127 each coordinate heme.

It belongs to the CcmE/CycJ family.

The protein localises to the cell inner membrane. Heme chaperone required for the biogenesis of c-type cytochromes. Transiently binds heme delivered by CcmC and transfers the heme to apo-cytochromes in a process facilitated by CcmF and CcmH. The sequence is that of Cytochrome c-type biogenesis protein CcmE from Cupriavidus taiwanensis (strain DSM 17343 / BCRC 17206 / CCUG 44338 / CIP 107171 / LMG 19424 / R1) (Ralstonia taiwanensis (strain LMG 19424)).